The following is a 705-amino-acid chain: Translation initiation factor IF-2 (705 aa).

A disordered region spans residues 40-124 (DDQIKALDKK…QPAAPKEIPS (85 aa)). A compositionally biased stretch (basic and acidic residues) spans 41–58 (DQIKALDKKFKKEQKNDN). Low complexity predominate over residues 59–77 (KQSTQNNHQKSNNQNQNKG). Basic residues predominate over residues 94–108 (KGNKKNNRNNKKNNK). The tr-type G domain maps to 207–376 (ERPAVVTIMG…GLVAEVQELK (170 aa)). The interval 216–223 (GHVDHGKT) is G1. 216-223 (GHVDHGKT) serves as a coordination point for GTP. Residues 241 to 245 (GITQH) form a G2 region. Residues 262 to 265 (DTPG) are G3. GTP is bound by residues 262-266 (DTPGH) and 316-319 (NKID). Positions 316–319 (NKID) are G4. The segment at 352-354 (SAL) is G5.

The protein belongs to the TRAFAC class translation factor GTPase superfamily. Classic translation factor GTPase family. IF-2 subfamily.

The protein resides in the cytoplasm. In terms of biological role, one of the essential components for the initiation of protein synthesis. Protects formylmethionyl-tRNA from spontaneous hydrolysis and promotes its binding to the 30S ribosomal subunits. Also involved in the hydrolysis of GTP during the formation of the 70S ribosomal complex. This is Translation initiation factor IF-2 from Staphylococcus aureus (strain USA300).